We begin with the raw amino-acid sequence, 134 residues long: Postmeiotic segregation increased 2-like protein 5 (134 aa).

The protein belongs to the DNA mismatch repair MutL/HexB family.

In Homo sapiens (Human), this protein is Postmeiotic segregation increased 2-like protein 5 (PMS2P5).